Consider the following 286-residue polypeptide: Sulfate transport system permease protein CysT (286 aa).

7 consecutive transmembrane segments (helical) span residues 27-47, 74-94, 108-128, 146-166, 195-215, 224-244, and 257-276; these read WVVT…ALLV, FITA…VAWV, AMVD…LATL, IAFS…PFIV, FWRV…ALGF, SVVL…VLVF, and VIGA…INLL. The region spanning 70–273 is the ABC transmembrane type-1 domain; the sequence is YNVTFITALA…SVSLILLLII (204 aa).

It belongs to the binding-protein-dependent transport system permease family. CysTW subfamily. As to quaternary structure, the complex is composed of two ATP-binding proteins (CysA), two transmembrane proteins (CysT and CysW) and a solute-binding protein (CysP).

The protein localises to the cell inner membrane. Functionally, part of the ABC transporter complex CysAWTP (TC 3.A.1.6.1) involved in sulfate/thiosulfate import. Probably responsible for the translocation of the substrate across the membrane. This chain is Sulfate transport system permease protein CysT (cysT), found in Synechocystis sp. (strain ATCC 27184 / PCC 6803 / Kazusa).